The chain runs to 269 residues: Shikimate dehydrogenase (NADP(+)) (269 aa).

Shikimate-binding positions include threonine 14 to serine 16 and threonine 60. The Proton acceptor role is filled by lysine 64. Aspartate 76 contacts NADP(+). Shikimate contacts are provided by asparagine 85 and aspartate 100. Residues glycine 122–alanine 126 and methionine 208 contribute to the NADP(+) site. Shikimate is bound at residue tyrosine 210. Glycine 232 is an NADP(+) binding site.

Belongs to the shikimate dehydrogenase family. As to quaternary structure, homodimer.

It catalyses the reaction shikimate + NADP(+) = 3-dehydroshikimate + NADPH + H(+). It functions in the pathway metabolic intermediate biosynthesis; chorismate biosynthesis; chorismate from D-erythrose 4-phosphate and phosphoenolpyruvate: step 4/7. Its function is as follows. Involved in the biosynthesis of the chorismate, which leads to the biosynthesis of aromatic amino acids. Catalyzes the reversible NADPH linked reduction of 3-dehydroshikimate (DHSA) to yield shikimate (SA). The chain is Shikimate dehydrogenase (NADP(+)) from Caldivirga maquilingensis (strain ATCC 700844 / DSM 13496 / JCM 10307 / IC-167).